A 105-amino-acid polypeptide reads, in one-letter code: Thioredoxin (105 aa).

The Thioredoxin domain occupies 1–105 (MASNVTDKSF…SLIEWINNNI (105 aa)). Cys30 and Cys33 form a disulfide bridge.

This sequence belongs to the thioredoxin family.

In terms of biological role, component of the thioredoxin-thioredoxin reductase system. Participates in various redox reactions through the reversible oxidation of its active center dithiol to a disulfide and catalyzes dithiol-disulfide exchange reactions. In Rickettsia bellii (strain RML369-C), this protein is Thioredoxin (trxA).